Here is a 485-residue protein sequence, read N- to C-terminus: E3 ubiquitin-protein ligase TRIM34B (485 aa).

An RING-type zinc finger spans residues Cys-15–Cys-58. Residues Thr-91–His-127 form a B box-type zinc finger. Positions 96, 99, 118, and 124 each coordinate Zn(2+). Positions Val-136–Ser-170 form a coiled coil. Residues Leu-282 to Ser-485 enclose the B30.2/SPRY domain.

The protein belongs to the TRIM/RBCC family. As to quaternary structure, homotrimer. Interacts (via B-box and SPRY domain) with TRIM5.

It localises to the cytoplasm. The protein localises to the mitochondrion. It catalyses the reaction S-ubiquitinyl-[E2 ubiquitin-conjugating enzyme]-L-cysteine + [acceptor protein]-L-lysine = [E2 ubiquitin-conjugating enzyme]-L-cysteine + N(6)-ubiquitinyl-[acceptor protein]-L-lysine.. It participates in protein modification; protein ubiquitination. In terms of biological role, functions as antiviral protein and contributes to the defense against retroviral infections. Acts as a capsid-specific restriction factor with the help of TRIM5 and prevents infection from non-host-adapted retroviruses. During influenza A virus infection, promotes programmed cell death by targeting ZBP1 for 'Lys-63'-linked polyubiquitination. In turn, promotes ZBP1 recruitment of RIPK3 to mediate virus-induced programmed necrosis. Negatively regulates the function of mitochondria by enhancing mitochondrial depolarization leading to cytochrome c release and mitochondria-dependent apoptosis. Also promotes the formation of multinucleated giant cells by means of cell fusion and phagocytosis in epithelial cells. Regulates intestinal inflammation by controlling the exocytosis of the major component of colonic mucus MUC2 from colonic goblet cells. This is E3 ubiquitin-protein ligase TRIM34B from Mus musculus (Mouse).